The following is a 202-amino-acid chain: Keratin-associated protein 5-10 (202 aa).

7 repeat units span residues C48–P51, C54–P57, C144–P147, C162–P165, C172–P175, C182–P185, and C192–P195. Residues C48–P195 form a 7 X 4 AA repeats of C-C-X-P region.

The protein belongs to the KRTAP type 5 family. As to quaternary structure, interacts with hair keratins. In terms of tissue distribution, expressed in hair root but not in skin. Expressed also in brain and skeletal muscle.

In terms of biological role, in the hair cortex, hair keratin intermediate filaments are embedded in an interfilamentous matrix, consisting of hair keratin-associated protein (KRTAP), which are essential for the formation of a rigid and resistant hair shaft through their extensive disulfide bond cross-linking with abundant cysteine residues of hair keratins. The matrix proteins include the high-sulfur and high-glycine-tyrosine keratins. The polypeptide is Keratin-associated protein 5-10 (KRTAP5-10) (Homo sapiens (Human)).